Here is a 530-residue protein sequence, read N- to C-terminus: Berberine bridge enzyme-like 4 (530 aa).

A signal peptide spans 1–19; it reads MKGTLSVLCLVLLVSVLEA. Cys-32 and Cys-95 are joined by a disulfide. Residue Asn-52 is glycosylated (N-linked (GlcNAc...) asparagine). Residues 73-247 form the FAD-binding PCMH-type domain; sequence NYRKLLAIVA…LSWKINLVDV (175 aa). A cross-link (6-(S-cysteinyl)-8alpha-(pros-histidyl)-FAD (His-Cys)) is located at residues 110-172; the sequence is HDYEGLSYMS…QTLAFPAGVC (63 aa). N-linked (GlcNAc...) asparagine glycosylation is found at Asn-257, Asn-292, Asn-341, and Asn-441.

It belongs to the oxygen-dependent FAD-linked oxidoreductase family. Requires FAD as cofactor. The FAD cofactor is bound via a bicovalent 6-S-cysteinyl, 8alpha-N1-histidyl FAD linkage.

The protein resides in the secreted. Its subcellular location is the cell wall. Functionally, probable flavin-dependent oxidoreductase. This chain is Berberine bridge enzyme-like 4, found in Arabidopsis thaliana (Mouse-ear cress).